A 348-amino-acid polypeptide reads, in one-letter code: ECA polysaccharide chain length modulation protein (348 aa).

The Cytoplasmic segment spans residues 1–30 (MTQPMPGKPAEDAENELDIRGLFRTLWAGK). A helical transmembrane segment spans residues 31-51 (LWIIGMGLAFALIALAYTFFA). At 52-322 (RQEWSSTAIT…EPVKRDSPRR (271 aa)) the chain is on the periplasmic side. Residues 323-343 (AFLMIMWGIVGGLIGAGVALT) traverse the membrane as a helical segment. Topologically, residues 344–348 (RRCSK) are cytoplasmic.

This sequence belongs to the WzzB/Cld/Rol family. Homooctamer. Probably part of a complex composed of WzxE, WzyE and WzzE.

Its subcellular location is the cell inner membrane. It participates in bacterial outer membrane biogenesis; enterobacterial common antigen biosynthesis. Modulates the polysaccharide chain length of enterobacterial common antigen (ECA). The polypeptide is ECA polysaccharide chain length modulation protein (Escherichia coli O157:H7).